Here is a 787-residue protein sequence, read N- to C-terminus: ER degradation-enhancing alpha-mannosidase-like protein 1 (787 aa).

A signal peptide spans 1-22 (MGSLHSIFCVCLILLCIFKENS). Residues N479, N609, N670, N693, and N756 are each glycosylated (N-linked (GlcNAc...) asparagine).

Belongs to the glycosyl hydrolase 47 family.

It localises to the endoplasmic reticulum lumen. Functionally, alpha-mannosidase-like protein involved in endoplasmic reticulum-associated degradation (ERAD). Delivers misfolded glycoproteins to proteasomes. It lacks mannosidase activity. The protein is ER degradation-enhancing alpha-mannosidase-like protein 1 (mnl1) of Schizosaccharomyces pombe (strain 972 / ATCC 24843) (Fission yeast).